We begin with the raw amino-acid sequence, 258 residues long: UBX domain-containing protein 2A (258 aa).

The required for interaction with CHRNA3 stretch occupies residues 1-152 (MKEVDNLDSI…SATPRIVSKA (152 aa)). The segment at 1-165 (MKEVDNLDSI…EVDNKSTLSA (165 aa)) is required for inhibition of CHRNA3 ubiquitination and translocation of CHRNA3 to the plasma membrane resulting in an increase in acetylcholine-gated nicotinic acetylcholine receptor currents. The SEP domain occupies 61 to 125 (QVDVNIKLWK…VEDKKNEVCM (65 aa)). The required for interaction with VCP stretch occupies residues 168-258 (LNNLEPITRI…QKTAEPFRKL (91 aa)). Residues 170 to 247 (NLEPITRIQI…DLQNAVIIQR (78 aa)) enclose the UBX domain.

In terms of assembly, part of a complex composed of STUB1/CHIP, VCP/p97, CHRNA3, and UBXN2A that modulates the ubiquitination and endoplasmic reticulum-associated degradation (ERAD) of CHRNA3. Within the complex UBXN2A acts as a scaffold protein required for the interaction of CHRNA3 with VCP/p97, this interaction also inhibits CHRNA3 ubiquitination by STUB1/CHIP and subsequently ERAD. Interacts (via SEP domain) with CHRNA3 and interacts (via UBX domain) with VCP/P97; these interactions are required for the interaction of CHRNA3 with the STUB1-VCP-UBXN2A complex. Interacts with HSPA9/MOT-2 (via SBD domain); the interaction inhibits HSPA9/MOT-2 interaction with and degradation of p53, thereby promotes p53 translocation to the nucleus. Interacts with RICTOR. In terms of processing, ubiquitinated.

It is found in the golgi apparatus. Its subcellular location is the endoplasmic reticulum. It localises to the perikaryon. The protein resides in the cell projection. The protein localises to the dendrite. It is found in the nucleus. Its subcellular location is the cytoplasm. In terms of biological role, acts to repress the ubiquitination and subsequent endoplasmic reticulum-associated degradation of CHRNA3 by the STUB1-VCP-UBXN2A complex in cortical neurons. Also acts to promote the translocation of CHRNA3 to the plasma membrane and subsequently increases plasma membrane acetylcholine-gated ion-channel activation. Plays a role in the inhibition of STUB1-mediated TP53 degradation, via its interaction with HSPA9 which acts to inhibit TP53 binding to HSPA9. Positively mediates the ubiquitination and proteosomal degradation of RICTOR, may thereby act as a negative regulator of the mTORC2 pathway. In Rattus norvegicus (Rat), this protein is UBX domain-containing protein 2A.